Here is a 453-residue protein sequence, read N- to C-terminus: T-box transcription factor T homolog (453 aa).

A DNA-binding region (T-box) is located at residues 47–217; it reads LWRRFSKLTN…YNPFAKAFLD (171 aa). The interval 283 to 304 is disordered; the sequence is RSHRSTPYPPPPYEQKYSPTSA.

It is found in the nucleus. Functionally, may be involved in the transcriptional regulation of genes required for gastrulation. This chain is T-box transcription factor T homolog, found in Patiria pectinifera (Starfish).